A 396-amino-acid chain; its full sequence is Putative carbamoyltransferase YgeW (396 aa).

Carbamoyl phosphate-binding positions include 71–74 (STRT), glutamine 98, 165–168 (HPTQ), and 330–331 (CL).

This sequence belongs to the aspartate/ornithine carbamoyltransferase superfamily. As to quaternary structure, homotrimer.

The protein is Putative carbamoyltransferase YgeW (ygeW) of Escherichia coli O157:H7.